Consider the following 273-residue polypeptide: Probable ribosomal RNA small subunit methyltransferase A (273 aa).

Residues asparagine 23, leucine 25, glycine 50, glutamate 71, aspartate 95, and asparagine 110 each coordinate S-adenosyl-L-methionine.

The protein belongs to the class I-like SAM-binding methyltransferase superfamily. rRNA adenine N(6)-methyltransferase family. RsmA subfamily.

The protein resides in the cytoplasm. In terms of biological role, specifically dimethylates two adjacent adenosines in the loop of a conserved hairpin near the 3'-end of 16S rRNA in the 30S particle. May play a critical role in biogenesis of 30S subunits. The chain is Probable ribosomal RNA small subunit methyltransferase A from Pyrococcus furiosus (strain ATCC 43587 / DSM 3638 / JCM 8422 / Vc1).